The following is a 385-amino-acid chain: Cytochrome b (385 aa).

Helical transmembrane passes span Phe32–Met52, Trp76–Gly98, Pro113–Val133, and Phe179–Ile199. The heme b site is built by His82 and His96. Residues His183 and His197 each coordinate heme b. Residue His202 participates in a ubiquinone binding. The next 4 membrane-spanning stretches (helical) occupy residues Tyr225–Phe245, Leu289–Asp309, Ile321–Gln341, and Phe348–Pro368.

This sequence belongs to the cytochrome b family. As to quaternary structure, fungal cytochrome b-c1 complex contains 10 subunits; 3 respiratory subunits, 2 core proteins and 5 low-molecular weight proteins. Cytochrome b-c1 complex is a homodimer. It depends on heme b as a cofactor.

It is found in the mitochondrion inner membrane. In terms of biological role, component of the ubiquinol-cytochrome c reductase complex (complex III or cytochrome b-c1 complex) that is part of the mitochondrial respiratory chain. The b-c1 complex mediates electron transfer from ubiquinol to cytochrome c. Contributes to the generation of a proton gradient across the mitochondrial membrane that is then used for ATP synthesis. The chain is Cytochrome b (COB) from Yarrowia lipolytica (strain CLIB 122 / E 150) (Yeast).